A 132-amino-acid chain; its full sequence is Aspartate 1-decarboxylase (132 aa).

Ser25 serves as the catalytic Schiff-base intermediate with substrate; via pyruvic acid. Residue Ser25 is modified to Pyruvic acid (Ser). Thr57 is a binding site for substrate. Tyr58 functions as the Proton donor in the catalytic mechanism. 73 to 75 (GAA) lines the substrate pocket.

The protein belongs to the PanD family. As to quaternary structure, heterooctamer of four alpha and four beta subunits. The cofactor is pyruvate. In terms of processing, is synthesized initially as an inactive proenzyme, which is activated by self-cleavage at a specific serine bond to produce a beta-subunit with a hydroxyl group at its C-terminus and an alpha-subunit with a pyruvoyl group at its N-terminus.

The protein resides in the cytoplasm. It catalyses the reaction L-aspartate + H(+) = beta-alanine + CO2. Its pathway is cofactor biosynthesis; (R)-pantothenate biosynthesis; beta-alanine from L-aspartate: step 1/1. Functionally, catalyzes the pyruvoyl-dependent decarboxylation of aspartate to produce beta-alanine. The polypeptide is Aspartate 1-decarboxylase (Heliobacterium modesticaldum (strain ATCC 51547 / Ice1)).